A 345-amino-acid polypeptide reads, in one-letter code: D-fructose 1,6-bisphosphatase class 2/sedoheptulose 1,7-bisphosphatase (345 aa).

Mn(2+) contacts are provided by aspartate 33, glutamate 57, aspartate 97, and glutamate 100. Substrate contacts are provided by residues 100 to 102 (EGT), tyrosine 131, 176 to 178 (RPR), and 198 to 200 (DGD). Glutamate 225 lines the Mn(2+) pocket.

It belongs to the FBPase class 2 family. As to quaternary structure, homotetramer. Requires Mn(2+) as cofactor.

It carries out the reaction beta-D-fructose 1,6-bisphosphate + H2O = beta-D-fructose 6-phosphate + phosphate. It catalyses the reaction D-sedoheptulose 1,7-bisphosphate + H2O = D-sedoheptulose 7-phosphate + phosphate. The protein operates within carbohydrate biosynthesis; Calvin cycle. Functionally, catalyzes the hydrolysis of fructose 1,6-bisphosphate (Fru 1,6-P2) and sedoheptulose 1,7-bisphosphate (Sed 1,7-P2) to fructose 6-phosphate and sedoheptulose 7-phosphate, respectively. The chain is D-fructose 1,6-bisphosphatase class 2/sedoheptulose 1,7-bisphosphatase from Trichodesmium erythraeum (strain IMS101).